Here is a 141-residue protein sequence, read N- to C-terminus: uncharacterized protein (141 aa).

A run of 2 helical transmembrane segments spans residues 12–32 (GIAG…TLVT) and 35–55 (PGRV…SATW).

The protein resides in the cell membrane. This is an uncharacterized protein from Mycobacterium tuberculosis (strain CDC 1551 / Oshkosh).